Here is a 490-residue protein sequence, read N- to C-terminus: Aspartyl/glutamyl-tRNA(Asn/Gln) amidotransferase subunit B (490 aa).

This sequence belongs to the GatB/GatE family. GatB subfamily. In terms of assembly, heterotrimer of A, B and C subunits.

It catalyses the reaction L-glutamyl-tRNA(Gln) + L-glutamine + ATP + H2O = L-glutaminyl-tRNA(Gln) + L-glutamate + ADP + phosphate + H(+). The catalysed reaction is L-aspartyl-tRNA(Asn) + L-glutamine + ATP + H2O = L-asparaginyl-tRNA(Asn) + L-glutamate + ADP + phosphate + 2 H(+). Its function is as follows. Allows the formation of correctly charged Asn-tRNA(Asn) or Gln-tRNA(Gln) through the transamidation of misacylated Asp-tRNA(Asn) or Glu-tRNA(Gln) in organisms which lack either or both of asparaginyl-tRNA or glutaminyl-tRNA synthetases. The reaction takes place in the presence of glutamine and ATP through an activated phospho-Asp-tRNA(Asn) or phospho-Glu-tRNA(Gln). The polypeptide is Aspartyl/glutamyl-tRNA(Asn/Gln) amidotransferase subunit B (Prochlorococcus marinus (strain MIT 9515)).